A 93-amino-acid chain; its full sequence is Class I hydrophobin SSP1 (93 aa).

The first 26 residues, 1–26 (MKYITAISMLATAALTAATPLNGVEA), serve as a signal peptide directing secretion. Disulfide bonds link Cys39/Cys71, Cys47/Cys65, Cys48/Cys56, and Cys72/Cys89.

The protein belongs to the fungal hydrophobin family. Self-assembles to form functional amyloid fibrils called rodlets. Self-assembly into fibrillar rodlets occurs spontaneously at hydrophobic:hydrophilic interfaces and the rodlets further associate laterally to form amphipathic monolayers.

It localises to the secreted. It is found in the cell wall. Aerial growth, conidiation, and dispersal of filamentous fungi in the environment rely upon a capability of their secreting small amphipathic proteins called hydrophobins (HPBs) with low sequence identity. Class I can self-assemble into an outermost layer of rodlet bundles on aerial cell surfaces, conferring cellular hydrophobicity that supports fungal growth, development and dispersal; whereas Class II form highly ordered films at water-air interfaces through intermolecular interactions but contribute nothing to the rodlet structure. SSP1 is a class I hydrophobin that acts as an effector in the ericoid mycorrhizal interaction with Vaccinium myrtillus. May enhance attachment of the fungus to the root surface and protect the fungal hypha from plant defense compounds. This chain is Class I hydrophobin SSP1, found in Oidiodendron maius (strain Zn).